A 424-amino-acid polypeptide reads, in one-letter code: MSLDSPTFGCTDSPVRRERGQKAVFCGLTSIVWLHRKMQDAFFLVVGSRTCAHLLQAAAGVMIFAEPRFGTAVLEEQDLAGLADAHKELDREVAKLLERRPDIRQLFLVGSCPSEVLKLDLDRAAERLSGLHAPHVRVYSYTGSGLDTTFTQGEDTCLAAMVPTLDTTEAAELIVVGALPDVVEDQCLSLLTQLGVGPVRMLPARRSDIEPAVGPNTRFILAQPFLGETTGALERRGAKRIAAPFPFGEEGTTLWLKAVADAYGVSAEKFEAVTAAPRARAKKAIAAHLETLTGKSLFMFPDSQLEIPLARFLARECGMKTTEIATPFLHKAIMAPDLALLPSNTALTEGQDLEAQLDRHEAINPDLTVCGLGLANPLEAKGHATKWAIELVFTPVHFYEQAGDLAGLFSRPLRRRALLNGGAA.

Positions 26, 51, and 112 each coordinate [4Fe-4S] cluster.

The protein belongs to the BchN/ChlN family. In terms of assembly, protochlorophyllide reductase is composed of three subunits; BchL, BchN and BchB. Forms a heterotetramer of two BchB and two BchN subunits. It depends on [4Fe-4S] cluster as a cofactor.

The catalysed reaction is chlorophyllide a + oxidized 2[4Fe-4S]-[ferredoxin] + 2 ADP + 2 phosphate = protochlorophyllide a + reduced 2[4Fe-4S]-[ferredoxin] + 2 ATP + 2 H2O. Its pathway is porphyrin-containing compound metabolism; bacteriochlorophyll biosynthesis (light-independent). In terms of biological role, component of the dark-operative protochlorophyllide reductase (DPOR) that uses Mg-ATP and reduced ferredoxin to reduce ring D of protochlorophyllide (Pchlide) to form chlorophyllide a (Chlide). This reaction is light-independent. The NB-protein (BchN-BchB) is the catalytic component of the complex. The sequence is that of Light-independent protochlorophyllide reductase subunit N from Rhodobacter capsulatus (strain ATCC BAA-309 / NBRC 16581 / SB1003).